We begin with the raw amino-acid sequence, 545 residues long: Glucose-6-phosphate isomerase (545 aa).

The active-site Proton donor is Glu353. Active-site residues include His384 and Lys510.

This sequence belongs to the GPI family.

The protein resides in the cytoplasm. The catalysed reaction is alpha-D-glucose 6-phosphate = beta-D-fructose 6-phosphate. It functions in the pathway carbohydrate biosynthesis; gluconeogenesis. It participates in carbohydrate degradation; glycolysis; D-glyceraldehyde 3-phosphate and glycerone phosphate from D-glucose: step 2/4. Catalyzes the reversible isomerization of glucose-6-phosphate to fructose-6-phosphate. The polypeptide is Glucose-6-phosphate isomerase (Aromatoleum aromaticum (strain DSM 19018 / LMG 30748 / EbN1) (Azoarcus sp. (strain EbN1))).